Here is a 1010-residue protein sequence, read N- to C-terminus: Outer kinetochore KNL1 complex subunit knl-1 (1010 aa).

9 repeat units span residues 85 to 88, 109 to 112, 228 to 231, 255 to 258, 278 to 281, 323 to 326, 346 to 349, 402 to 405, and 428 to 431. The tract at residues 85–431 is 9 X 4 AA repeats of M-[D/E]-[I/L/M]-[S/T]; it reads MDISESPACT…LQKEDLMDIS (347 aa). 2 coiled-coil regions span residues 820-915 and 956-988; these read RIVE…GLDK and KALR…KFAQ.

As to quaternary structure, component of the KNL1 complex composed of knl-1 and kbp-5. Part of the ten-subunit outer kinetochore KMN network that includes the KNL1, MIS12 and NDC80 complexes. Interacts with the protein phosphatase 1 (PP1) catalytic subunit gsp-1; the interaction is direct. Interacts with the protein phosphatase 1 (PP1) catalytic subunit gsp-2; the interaction is direct. Interacts with the MIS12 complex subunits kbp-1, kbp-2 and mis-12. Interacts with the NDC80 complex components ndc-80 and him-10. Interacts with knl-3. Interacts with kbp-3. Interacts with kbp-4. Interacts with kbp-5.

The protein resides in the cytoplasm. Its subcellular location is the cell cortex. The protein localises to the chromosome. It localises to the centromere. It is found in the kinetochore. Functionally, acts as a component of the outer kinetochore KNL1 complex that serves as a docking point for spindle assembly checkpoint components and mediates microtubule-kinetochore interactions. Kinetochores, consisting of a centromere-associated inner segment and a microtubule-contacting outer segment, play a crucial role in chromosome segregation by mediating the physical connection between centromeric DNA and spindle microtubules. The outer kinetochore is made up of the ten-subunit KMN network, comprising the MIS12, NDC80 and KNL1 complexes, and auxiliary microtubule-associated components; together they connect the outer kinetochore with the inner kinetochore, bind microtubules, and mediate interactions with mitotic checkpoint proteins that delay anaphase until chromosomes are bioriented on the spindle. Binds the protein phosphatase 1 catalytic subunits gsp-1 and gsp-2, which has a role in delaying formation of load-bearing kinetochore-microtubule attachments. Required for the recruitment of spindle-assembly checkpoint components bub-1 and mdf-1/2 to unattached kinetochores. Binds microtubules which plays a role in silencing of the spindle assembly checkpoint, but not the formation of load-bearing microtubule-kinetochore attachments. Has a role in the correct localization of the spindly-like protein spdl-1 and the RZZ complex that is composed of rod-1, czw-1 and zwl-1 to kinetochores. In Caenorhabditis elegans, this protein is Outer kinetochore KNL1 complex subunit knl-1 (knl-1).